A 149-amino-acid chain; its full sequence is Large ribosomal subunit protein bL9 (149 aa).

Belongs to the bacterial ribosomal protein bL9 family.

Functionally, binds to the 23S rRNA. The sequence is that of Large ribosomal subunit protein bL9 from Pasteurella multocida (strain Pm70).